The chain runs to 561 residues: CWF19-like protein mug161 (561 aa).

The tract at residues 286–338 (QQTNKFHKSKSSTALFKSKKDSSSSLNKMHKSESHSALNNLHKSESGTSLNNR) is disordered. Phosphoserine is present on Ser-296. Thr-298 carries the post-translational modification Phosphothreonine. Phosphoserine occurs at positions 317, 319, 331, and 334. Residues 320-337 (HSALNNLHKSESGTSLNN) are compositionally biased toward polar residues.

Belongs to the CWF19 family.

The protein resides in the nucleus. In terms of biological role, has a role in meiosis. The sequence is that of CWF19-like protein mug161 (mug161) from Schizosaccharomyces pombe (strain 972 / ATCC 24843) (Fission yeast).